A 623-amino-acid chain; its full sequence is Membralin-like protein At1g60995 (623 aa).

A helical transmembrane segment spans residues 24–44 (GFLEYTYLFVAITLFCILVVM). Residues 99–119 (SLEVSKTDQESSTSEENTDDT) are disordered. 4 helical membrane-spanning segments follow: residues 315 to 335 (GVLMMSLFVFFTTTMSVSFTL), 363 to 383 (IFVHVIESLVFVPIMIGILFF), 392 to 412 (LLAFMVLVLVWLCELFTLISV), and 424 to 444 (FFLLYFLVFHIYFFSYAYGFS). Disordered regions lie at residues 506–567 (NRTT…QAGA) and 602–623 (EAQVFADTSPPQNPHHDPLSVD). Residues 514–531 (PSGPNHTTPNQNTETRSF) show a composition bias toward polar residues.

It belongs to the membralin family.

Its subcellular location is the membrane. The chain is Membralin-like protein At1g60995 from Arabidopsis thaliana (Mouse-ear cress).